Here is a 369-residue protein sequence, read N- to C-terminus: Anhydro-N-acetylmuramic acid kinase (369 aa).

Residue 12-19 participates in ATP binding; it reads GTSLDGVD.

Belongs to the anhydro-N-acetylmuramic acid kinase family.

The enzyme catalyses 1,6-anhydro-N-acetyl-beta-muramate + ATP + H2O = N-acetyl-D-muramate 6-phosphate + ADP + H(+). It participates in amino-sugar metabolism; 1,6-anhydro-N-acetylmuramate degradation. Its pathway is cell wall biogenesis; peptidoglycan recycling. Catalyzes the specific phosphorylation of 1,6-anhydro-N-acetylmuramic acid (anhMurNAc) with the simultaneous cleavage of the 1,6-anhydro ring, generating MurNAc-6-P. Is required for the utilization of anhMurNAc either imported from the medium or derived from its own cell wall murein, and thus plays a role in cell wall recycling. The protein is Anhydro-N-acetylmuramic acid kinase of Escherichia coli O81 (strain ED1a).